The primary structure comprises 547 residues: Chaperonin GroEL (547 aa).

ATP-binding positions include 30-33 (TLGP), 87-91 (DGTTT), Gly414, 478-480 (DAL), and Asp494.

It belongs to the chaperonin (HSP60) family. In terms of assembly, forms a cylinder of 14 subunits composed of two heptameric rings stacked back-to-back. Interacts with the co-chaperonin GroES.

Its subcellular location is the cytoplasm. The catalysed reaction is ATP + H2O + a folded polypeptide = ADP + phosphate + an unfolded polypeptide.. Functionally, together with its co-chaperonin GroES, plays an essential role in assisting protein folding. The GroEL-GroES system forms a nano-cage that allows encapsulation of the non-native substrate proteins and provides a physical environment optimized to promote and accelerate protein folding. In Desulforudis audaxviator (strain MP104C), this protein is Chaperonin GroEL.